Here is a 284-residue protein sequence, read N- to C-terminus: UDP-N-acetylenolpyruvoylglucosamine reductase (284 aa).

An FAD-binding PCMH-type domain is found at 12–174; it reads KIGGRVKYLV…TRVMMSFKRE (163 aa). The active site involves Arg-153. The active-site Proton donor is the Ser-203. Glu-274 is an active-site residue.

The protein belongs to the MurB family. FAD serves as cofactor.

The protein resides in the cytoplasm. It carries out the reaction UDP-N-acetyl-alpha-D-muramate + NADP(+) = UDP-N-acetyl-3-O-(1-carboxyvinyl)-alpha-D-glucosamine + NADPH + H(+). Its pathway is cell wall biogenesis; peptidoglycan biosynthesis. Cell wall formation. The sequence is that of UDP-N-acetylenolpyruvoylglucosamine reductase from Thermotoga petrophila (strain ATCC BAA-488 / DSM 13995 / JCM 10881 / RKU-1).